A 142-amino-acid polypeptide reads, in one-letter code: Small heat shock protein IbpB (142 aa).

A sHSP domain is found at 25-136 (GQEPQGFPPY…QPQRIAIGTT (112 aa)).

The protein belongs to the small heat shock protein (HSP20) family. In terms of assembly, homodimer. Forms homomultimers of about 100-150 subunits at optimal growth temperatures. Conformation changes to oligomers at high temperatures or high ionic concentrations. The decrease in size of the multimers is accompanied by an increase in chaperone activity.

It localises to the cytoplasm. In terms of biological role, associates with aggregated proteins, together with IbpA, to stabilize and protect them from irreversible denaturation and extensive proteolysis during heat shock and oxidative stress. Aggregated proteins bound to the IbpAB complex are more efficiently refolded and reactivated by the ATP-dependent chaperone systems ClpB and DnaK/DnaJ/GrpE. Its activity is ATP-independent. The sequence is that of Small heat shock protein IbpB from Serratia proteamaculans (strain 568).